We begin with the raw amino-acid sequence, 312 residues long: E3 ubiquitin-protein ligase RNF126-B (312 aa).

Zn(2+)-binding residues include C13, C16, C29, and C32. The C4-type zinc-finger motif lies at 13–32 (CHSCTAEITPRLPEYTCPRC). Disordered regions lie at residues 41–63 (PETSRNSESNSSNNSGTDQNRPS) and 96–139 (GTSG…RNEG). Positions 44–55 (SRNSESNSSNNS) are enriched in low complexity. Over residues 102-115 (EETRDGESRREHQS) the composition is skewed to basic and acidic residues. Residues 124–134 (PRARMSTRRGA) show a composition bias toward basic residues. The RING-type zinc-finger motif lies at 228–269 (CPVCKEDYTVGESVRQLPCNHLFHNDCIIPWLEQHDTCPVCR). The interval 275–312 (QNTATNPPGLTDMTFSSSSTSSSSSTSPTDENNTANNS) is disordered. Low complexity predominate over residues 290–301 (SSSSTSSSSSTS). The span at 302 to 312 (PTDENNTANNS) shows a compositional bias: polar residues.

It is found in the cytoplasm. The protein localises to the nucleus. It catalyses the reaction S-ubiquitinyl-[E2 ubiquitin-conjugating enzyme]-L-cysteine + [acceptor protein]-L-lysine = [E2 ubiquitin-conjugating enzyme]-L-cysteine + N(6)-ubiquitinyl-[acceptor protein]-L-lysine.. The protein operates within protein modification; protein ubiquitination. In terms of biological role, E3 ubiquitin-protein ligase that mediates ubiquitination oF target proteins. Depending on the associated E2 ligase, mediates 'Lys-27'-, 'Lys-29'-, 'Lys-48'- and/or 'Lys-63'-linked polyubiquitination of substrates. Part of a BAG6-dependent quality control process ensuring that proteins of the secretory pathway that are mislocalized to the cytosol are degraded by the proteasome. Probably acts by providing the ubiquitin ligase activity associated with the BAG6 complex and be responsible for ubiquitination of the hydrophobic mislocalized proteins and their targeting to the proteasome. The sequence is that of E3 ubiquitin-protein ligase RNF126-B from Xenopus laevis (African clawed frog).